A 274-amino-acid polypeptide reads, in one-letter code: Rhamnulose-1-phosphate aldolase (274 aa).

The active site involves E117. Zn(2+) contacts are provided by H141, H143, and H212.

It belongs to the aldolase class II family. RhaD subfamily. Homotetramer. It depends on Zn(2+) as a cofactor.

The protein localises to the cytoplasm. It catalyses the reaction L-rhamnulose 1-phosphate = (S)-lactaldehyde + dihydroxyacetone phosphate. It functions in the pathway carbohydrate degradation; L-rhamnose degradation; glycerone phosphate from L-rhamnose: step 3/3. In terms of biological role, catalyzes the reversible cleavage of L-rhamnulose-1-phosphate to dihydroxyacetone phosphate (DHAP) and L-lactaldehyde. The sequence is that of Rhamnulose-1-phosphate aldolase from Escherichia coli O127:H6 (strain E2348/69 / EPEC).